Here is a 352-residue protein sequence, read N- to C-terminus: DNA ADP-ribosyl glycohydrolase (352 aa).

The 155-residue stretch at 1-155 (MITYGSGDLL…IYPPSGGSRA (155 aa)) folds into the Macro domain. ADP-D-ribose is bound by residues 8–9 (DL), 20–22 (TVN), 31–34 (IALQ), and threonine 79. Residue lysine 80 is the Nucleophile of the active site. 117 to 121 (GVGNG) lines the ADP-D-ribose pocket. The interaction with DarT stretch occupies residues 164 to 352 (MTWGRAVILE…VALDRILMTA (189 aa)).

This sequence belongs to the DarG ADP-ribosyl glycohydrolase family. As to quaternary structure, interacts (via C-terminus) with cognate toxin DarT; this heterodimeric complex neutralizes the toxic effect of DarT by preventing ssDNA binding to DarT and consequently inactivating the toxin by direct protein-protein interactions.

The enzyme catalyses an N-(ADP-alpha-D-ribosyl)-thymidine in DNA + H2O = a thymidine in DNA + ADP-D-ribose. Its function is as follows. Antitoxin component of the hybrid type II/IV toxin-antitoxin (TA) system DarTG, which plays a crucial role in controlling bacterial growth and bacteriophage infection. De-ADP-ribosylates DNA (probably) modified on thymidine by its cognate toxin DarT, which neutralizes the activity of cognate toxin DarT. The sequence is that of DNA ADP-ribosyl glycohydrolase from Mycobacterium bovis (strain BCG / Pasteur 1173P2).